Consider the following 176-residue polypeptide: Ribosome maturation factor RimM (176 aa).

Residues 92-165 form the PRC barrel domain; the sequence is EDEFLYSDLI…RLVVVPPVYA (74 aa).

It belongs to the RimM family. As to quaternary structure, binds ribosomal protein uS19.

It localises to the cytoplasm. In terms of biological role, an accessory protein needed during the final step in the assembly of 30S ribosomal subunit, possibly for assembly of the head region. Essential for efficient processing of 16S rRNA. May be needed both before and after RbfA during the maturation of 16S rRNA. It has affinity for free ribosomal 30S subunits but not for 70S ribosomes. The chain is Ribosome maturation factor RimM from Paramagnetospirillum magneticum (strain ATCC 700264 / AMB-1) (Magnetospirillum magneticum).